Here is a 564-residue protein sequence, read N- to C-terminus: Proline--tRNA ligase (564 aa).

Belongs to the class-II aminoacyl-tRNA synthetase family. ProS type 1 subfamily. As to quaternary structure, homodimer.

Its subcellular location is the cytoplasm. It catalyses the reaction tRNA(Pro) + L-proline + ATP = L-prolyl-tRNA(Pro) + AMP + diphosphate. Catalyzes the attachment of proline to tRNA(Pro) in a two-step reaction: proline is first activated by ATP to form Pro-AMP and then transferred to the acceptor end of tRNA(Pro). As ProRS can inadvertently accommodate and process non-cognate amino acids such as alanine and cysteine, to avoid such errors it has two additional distinct editing activities against alanine. One activity is designated as 'pretransfer' editing and involves the tRNA(Pro)-independent hydrolysis of activated Ala-AMP. The other activity is designated 'posttransfer' editing and involves deacylation of mischarged Ala-tRNA(Pro). The misacylated Cys-tRNA(Pro) is not edited by ProRS. This chain is Proline--tRNA ligase, found in Coxiella burnetii (strain Dugway 5J108-111).